The following is a 79-amino-acid chain: RNA-binding protein Hfq (79 aa).

The 60-residue stretch at 10-69 (DPFLNALRKEHVPVSIYLVNGIKLQGNIESFDQYVVLLRNTVTQMVYKHAISTVVPARPV) folds into the Sm domain.

Belongs to the Hfq family. Homohexamer.

Functionally, RNA chaperone that binds small regulatory RNA (sRNAs) and mRNAs to facilitate mRNA translational regulation in response to envelope stress, environmental stress and changes in metabolite concentrations. Also binds with high specificity to tRNAs. The sequence is that of RNA-binding protein Hfq from Burkholderia mallei (strain ATCC 23344).